Here is a 156-residue protein sequence, read N- to C-terminus: Small ribosomal subunit protein uS7 (156 aa).

Belongs to the universal ribosomal protein uS7 family. Part of the 30S ribosomal subunit. Contacts proteins S9 and S11.

Functionally, one of the primary rRNA binding proteins, it binds directly to 16S rRNA where it nucleates assembly of the head domain of the 30S subunit. Is located at the subunit interface close to the decoding center, probably blocks exit of the E-site tRNA. In Bacillus velezensis (strain DSM 23117 / BGSC 10A6 / LMG 26770 / FZB42) (Bacillus amyloliquefaciens subsp. plantarum), this protein is Small ribosomal subunit protein uS7.